Here is a 342-residue protein sequence, read N- to C-terminus: Heat-inducible transcription repressor HrcA (342 aa).

This sequence belongs to the HrcA family.

Negative regulator of class I heat shock genes (grpE-dnaK-dnaJ and groELS operons). Prevents heat-shock induction of these operons. The protein is Heat-inducible transcription repressor HrcA of Acholeplasma laidlawii.